The primary structure comprises 747 residues: Elongation factor G, mitochondrial (747 aa).

Residues 1–16 constitute a mitochondrion transit peptide; the sequence is MSLIMRVLNGNLSLRL. The tr-type G domain occupies 42-319; the sequence is ERIRNIGISA…AIIDYLPNPG (278 aa). Residues 51-58, 118-122, and 172-175 each bind GTP; these read AHIDSGKT, DTPGH, and NKLD.

It belongs to the TRAFAC class translation factor GTPase superfamily. Classic translation factor GTPase family. EF-G/EF-2 subfamily.

It is found in the mitochondrion. It functions in the pathway protein biosynthesis; polypeptide chain elongation. Mitochondrial GTPase that catalyzes the GTP-dependent ribosomal translocation step during translation elongation. During this step, the ribosome changes from the pre-translocational (PRE) to the post-translocational (POST) state as the newly formed A-site-bound peptidyl-tRNA and P-site-bound deacylated tRNA move to the P and E sites, respectively. Catalyzes the coordinated movement of the two tRNA molecules, the mRNA and conformational changes in the ribosome. Essential during development as it acts as a retrograde signal from mitochondria to the nucleus to slow down cell proliferation if mitochondrial energy output is low. The sequence is that of Elongation factor G, mitochondrial from Drosophila grimshawi (Hawaiian fruit fly).